Consider the following 120-residue polypeptide: Photosystem II extrinsic protein U (120 aa).

The first 29 residues, 1–29 (MKRLLSLLTGVLVMTGLLMALIFPQSAYA), serve as a signal peptide directing secretion.

The protein belongs to the PsbU family. In terms of assembly, PSII is composed of 1 copy each of membrane proteins PsbA, PsbB, PsbC, PsbD, PsbE, PsbF, PsbH, PsbI, PsbJ, PsbK, PsbL, PsbM, PsbT, PsbX, PsbY, Psb30/Ycf12, peripheral proteins PsbO, CyanoQ (PsbQ), PsbU, PsbV and a large number of cofactors. It forms dimeric complexes.

Its subcellular location is the cellular thylakoid membrane. Its function is as follows. One of the extrinsic, lumenal subunits of photosystem II (PSII). PSII is a light-driven water plastoquinone oxidoreductase, using light energy to abstract electrons from H(2)O, generating a proton gradient subsequently used for ATP formation. The extrinsic proteins stabilize the structure of photosystem II oxygen-evolving complex (OEC), the ion environment of oxygen evolution and protect the OEC against heat-induced inactivation. This chain is Photosystem II extrinsic protein U, found in Prochlorococcus marinus (strain MIT 9313).